The following is a 424-amino-acid chain: CinA-like protein (424 aa).

It belongs to the CinA family.

This is CinA-like protein from Nostoc sp. (strain PCC 7120 / SAG 25.82 / UTEX 2576).